A 206-amino-acid polypeptide reads, in one-letter code: Thiamine-phosphate synthase (206 aa).

4-amino-2-methyl-5-(diphosphooxymethyl)pyrimidine is bound by residues 33–37 (QMRFK) and asparagine 65. The Mg(2+) site is built by aspartate 66 and aspartate 85. Threonine 104 lines the 4-amino-2-methyl-5-(diphosphooxymethyl)pyrimidine pocket. 130 to 132 (TAT) provides a ligand contact to 2-[(2R,5Z)-2-carboxy-4-methylthiazol-5(2H)-ylidene]ethyl phosphate. Position 133 (lysine 133) interacts with 4-amino-2-methyl-5-(diphosphooxymethyl)pyrimidine. Glycine 166 lines the 2-[(2R,5Z)-2-carboxy-4-methylthiazol-5(2H)-ylidene]ethyl phosphate pocket.

The protein belongs to the thiamine-phosphate synthase family. Requires Mg(2+) as cofactor.

It catalyses the reaction 2-[(2R,5Z)-2-carboxy-4-methylthiazol-5(2H)-ylidene]ethyl phosphate + 4-amino-2-methyl-5-(diphosphooxymethyl)pyrimidine + 2 H(+) = thiamine phosphate + CO2 + diphosphate. The catalysed reaction is 2-(2-carboxy-4-methylthiazol-5-yl)ethyl phosphate + 4-amino-2-methyl-5-(diphosphooxymethyl)pyrimidine + 2 H(+) = thiamine phosphate + CO2 + diphosphate. The enzyme catalyses 4-methyl-5-(2-phosphooxyethyl)-thiazole + 4-amino-2-methyl-5-(diphosphooxymethyl)pyrimidine + H(+) = thiamine phosphate + diphosphate. It participates in cofactor biosynthesis; thiamine diphosphate biosynthesis; thiamine phosphate from 4-amino-2-methyl-5-diphosphomethylpyrimidine and 4-methyl-5-(2-phosphoethyl)-thiazole: step 1/1. Functionally, condenses 4-methyl-5-(beta-hydroxyethyl)thiazole monophosphate (THZ-P) and 2-methyl-4-amino-5-hydroxymethyl pyrimidine pyrophosphate (HMP-PP) to form thiamine monophosphate (TMP). The sequence is that of Thiamine-phosphate synthase from Flavobacterium psychrophilum (strain ATCC 49511 / DSM 21280 / CIP 103535 / JIP02/86).